The following is a 313-amino-acid chain: HPr kinase/phosphorylase (313 aa).

Active-site residues include His140 and Lys161. 155–162 (GDSGVGKS) lines the ATP pocket. Ser162 contributes to the Mg(2+) binding site. Asp179 functions as the Proton acceptor; for phosphorylation activity. Proton donor; for dephosphorylation activity in the catalytic mechanism. An important for the catalytic mechanism of both phosphorylation and dephosphorylation region spans residues 203 to 212 (LEIRGIGIID). Position 204 (Glu204) interacts with Mg(2+). Arg245 is an active-site residue. The tract at residues 266-271 (PVKVGR) is important for the catalytic mechanism of dephosphorylation.

This sequence belongs to the HPrK/P family. In terms of assembly, homohexamer. Mg(2+) serves as cofactor.

It carries out the reaction [HPr protein]-L-serine + ATP = [HPr protein]-O-phospho-L-serine + ADP + H(+). The catalysed reaction is [HPr protein]-O-phospho-L-serine + phosphate + H(+) = [HPr protein]-L-serine + diphosphate. In terms of biological role, catalyzes the ATP- as well as the pyrophosphate-dependent phosphorylation of a specific serine residue in HPr, a phosphocarrier protein of the phosphoenolpyruvate-dependent sugar phosphotransferase system (PTS). HprK/P also catalyzes the pyrophosphate-producing, inorganic phosphate-dependent dephosphorylation (phosphorolysis) of seryl-phosphorylated HPr (P-Ser-HPr). The two antagonistic activities of HprK/P are regulated by several intracellular metabolites, which change their concentration in response to the absence or presence of rapidly metabolisable carbon sources (glucose, fructose, etc.) in the growth medium. Therefore, by controlling the phosphorylation state of HPr, HPrK/P is a sensor enzyme that plays a major role in the regulation of carbon metabolism and sugar transport: it mediates carbon catabolite repression (CCR), and regulates PTS-catalyzed carbohydrate uptake and inducer exclusion. The protein is HPr kinase/phosphorylase of Latilactobacillus sakei subsp. sakei (strain 23K) (Lactobacillus sakei subsp. sakei).